The chain runs to 152 residues: ALNEADGSNKSAISKYIETTYGELPDETVLGSHLNKMKESGELAFKQNNYMKADPNAPPKRGRGRPPKPKVPLPPGTVVSPPRPRGRPPKDPNAPPKSPKAKATPATGRPRGRPKKVARSPAVPSPTAVSTGRPRGRPPKVKPQLTEVSVES.

The region spanning 1-54 (ALNEADGSNKSAISKYIETTYGELPDETVLGSHLNKMKESGELAFKQNNYMKAD) is the H15 domain. Residues 40–152 (SGELAFKQNN…PQLTEVSVES (113 aa)) form a disordered region. DNA-binding regions (a.T hook) lie at residues 60-68 (KRGRGRPPK), 82-90 (PRPRGRPPK), 108-116 (GRPRGRPKK), and 132-140 (GRPRGRPPK).

Belongs to the HMGA family.

It is found in the nucleus. The protein is HMG-Y-related protein B of Glycine max (Soybean).